A 353-amino-acid polypeptide reads, in one-letter code: 3-dehydroquinate synthase (353 aa).

Residues 61 to 66 (DGEEAK), 119 to 120 (TT), K132, and K141 each bind NAD(+). Zn(2+) contacts are provided by E174, H238, and H254.

This sequence belongs to the sugar phosphate cyclases superfamily. Dehydroquinate synthase family. Co(2+) is required as a cofactor. The cofactor is Zn(2+). Requires NAD(+) as cofactor.

The protein localises to the cytoplasm. The enzyme catalyses 7-phospho-2-dehydro-3-deoxy-D-arabino-heptonate = 3-dehydroquinate + phosphate. It functions in the pathway metabolic intermediate biosynthesis; chorismate biosynthesis; chorismate from D-erythrose 4-phosphate and phosphoenolpyruvate: step 2/7. Functionally, catalyzes the conversion of 3-deoxy-D-arabino-heptulosonate 7-phosphate (DAHP) to dehydroquinate (DHQ). The chain is 3-dehydroquinate synthase from Sulfolobus acidocaldarius (strain ATCC 33909 / DSM 639 / JCM 8929 / NBRC 15157 / NCIMB 11770).